Consider the following 390-residue polypeptide: Lipid-A-disaccharide synthase (390 aa).

Belongs to the LpxB family.

It catalyses the reaction a lipid X + a UDP-2-N,3-O-bis[(3R)-3-hydroxyacyl]-alpha-D-glucosamine = a lipid A disaccharide + UDP + H(+). It functions in the pathway bacterial outer membrane biogenesis; LPS lipid A biosynthesis. Functionally, condensation of UDP-2,3-diacylglucosamine and 2,3-diacylglucosamine-1-phosphate to form lipid A disaccharide, a precursor of lipid A, a phosphorylated glycolipid that anchors the lipopolysaccharide to the outer membrane of the cell. In Haemophilus influenzae (strain PittEE), this protein is Lipid-A-disaccharide synthase.